A 264-amino-acid polypeptide reads, in one-letter code: tRNA-uridine aminocarboxypropyltransferase A (264 aa).

Residues C25, C28, C35, and C37 each contribute to the Zn(2+) site. Positions 144-147 (DATW) match the DXTW motif. Residues 245–264 (RPKLLKKRFQNQQPLEQEEE) form a disordered region. Positions 254–264 (QNQQPLEQEEE) are enriched in polar residues.

It belongs to the TDD superfamily. DTWD2 family.

It catalyses the reaction a uridine in tRNA + S-adenosyl-L-methionine = a 3-[(3S)-3-amino-3-carboxypropyl]uridine in tRNA + S-methyl-5'-thioadenosine + H(+). Functionally, catalyzes the formation of 3-(3-amino-3-carboxypropyl)uridine (acp3U) at position 20a in the D-loop of several cytoplasmic tRNAs (acp3U(20a)). The protein is tRNA-uridine aminocarboxypropyltransferase A of Arabidopsis thaliana (Mouse-ear cress).